The following is a 485-amino-acid chain: MTITPQNLIALLPLLIVGLTVVVVMLSIAWRRNHFLNATLSVIGLNAALVSLWFVGQAGAMDVTPLMRVDGFAMLYTGLVLLASLATCTFAYPWLEGYNDNKDEFYLLVLIAALGGILLANANHLASLFLGIELISLPLFGLVGYAFRQKRSLEASIKYTILSAAASSFLLFGMALVYAQSGDLSFVALGKNLGDGMLNEPLLLAGFGMMIVGLGFKLSLVPFHLWTPDVYQGAPAPVSTFLATASKIAIFGVVMRLFLYAPVGDSEAIRVVLAIIAFASIIFGNLMALSQTNIKRLLGYSSISHLGYLLVALIALQTGEMSMEAVGVYLAGYLFSSLGAFGVVSLMSSPYRGPDADSLFSYRGLFWHRPILAAVMTVMMLSLAGIPMTLGFIGKFYVLAVGVQAHLWWLVGAVVVGSAIGLYYYLRVAVSLYLHAPEQPGRDAPSNWQYSAGGIVVLISALLVLVLGVWPQPLISIVRLAMPLM.

14 consecutive transmembrane segments (helical) span residues 8–28 (LIAL…MLSI), 35–55 (FLNA…LWFV), 71–91 (GFAM…CTFA), 105–125 (FYLL…ANHL), 127–147 (SLFL…GYAF), 159–179 (YTIL…LVYA), 203–223 (LLAG…LVPF), 235–255 (PAPV…GVVM), 271–291 (VVLA…ALSQ), 297–317 (LLGY…IALQ), 326–346 (VGVY…VVSL), 373–393 (AAVM…LGFI), 408–430 (WWLV…RVAV), and 455–475 (IVVL…QPLI).

The protein belongs to the complex I subunit 2 family. As to quaternary structure, NDH-1 is composed of 13 different subunits. Subunits NuoA, H, J, K, L, M, N constitute the membrane sector of the complex.

The protein localises to the cell inner membrane. The catalysed reaction is a quinone + NADH + 5 H(+)(in) = a quinol + NAD(+) + 4 H(+)(out). NDH-1 shuttles electrons from NADH, via FMN and iron-sulfur (Fe-S) centers, to quinones in the respiratory chain. The immediate electron acceptor for the enzyme in this species is believed to be ubiquinone. Couples the redox reaction to proton translocation (for every two electrons transferred, four hydrogen ions are translocated across the cytoplasmic membrane), and thus conserves the redox energy in a proton gradient. The chain is NADH-quinone oxidoreductase subunit N from Shigella flexneri.